We begin with the raw amino-acid sequence, 90 residues long: DNA-directed RNA polymerase subunit omega (90 aa).

It belongs to the RNA polymerase subunit omega family. As to quaternary structure, the RNAP catalytic core consists of 2 alpha, 1 beta, 1 beta' and 1 omega subunit. When a sigma factor is associated with the core the holoenzyme is formed, which can initiate transcription.

It carries out the reaction RNA(n) + a ribonucleoside 5'-triphosphate = RNA(n+1) + diphosphate. In terms of biological role, promotes RNA polymerase assembly. Latches the N- and C-terminal regions of the beta' subunit thereby facilitating its interaction with the beta and alpha subunits. The protein is DNA-directed RNA polymerase subunit omega of Streptomyces griseus subsp. griseus (strain JCM 4626 / CBS 651.72 / NBRC 13350 / KCC S-0626 / ISP 5235).